A 304-amino-acid polypeptide reads, in one-letter code: Acetyl-coenzyme A carboxylase carboxyl transferase subunit beta (304 aa).

The region spanning 23–292 is the CoA carboxyltransferase N-terminal domain; it reads VWTKCDSCGQ…PNPEAPREGV (270 aa). Zn(2+) is bound by residues C27, C30, C46, and C49. A C4-type zinc finger spans residues 27 to 49; that stretch reads CDSCGQVLYRAELERNLEVCPKC. Positions 284–304 are disordered; sequence NPEAPREGVVVPPVPDQEPEA. Positions 295-304 are enriched in pro residues; the sequence is PPVPDQEPEA.

It belongs to the AccD/PCCB family. In terms of assembly, acetyl-CoA carboxylase is a heterohexamer composed of biotin carboxyl carrier protein (AccB), biotin carboxylase (AccC) and two subunits each of ACCase subunit alpha (AccA) and ACCase subunit beta (AccD). The cofactor is Zn(2+).

The protein resides in the cytoplasm. It catalyses the reaction N(6)-carboxybiotinyl-L-lysyl-[protein] + acetyl-CoA = N(6)-biotinyl-L-lysyl-[protein] + malonyl-CoA. It functions in the pathway lipid metabolism; malonyl-CoA biosynthesis; malonyl-CoA from acetyl-CoA: step 1/1. Functionally, component of the acetyl coenzyme A carboxylase (ACC) complex. Biotin carboxylase (BC) catalyzes the carboxylation of biotin on its carrier protein (BCCP) and then the CO(2) group is transferred by the transcarboxylase to acetyl-CoA to form malonyl-CoA. This Escherichia coli O6:K15:H31 (strain 536 / UPEC) protein is Acetyl-coenzyme A carboxylase carboxyl transferase subunit beta.